Here is a 194-residue protein sequence, read N- to C-terminus: Histone H1 (194 aa).

The residue at position 1 (A1) is an N-acetylalanine; partial. Positions A1–K14 are enriched in low complexity. 2 disordered regions span residues A1–V31 and A105–K194. A compositionally biased stretch (basic residues) spans A15–K26. Positions S27–K100 constitute an H15 domain. A compositionally biased stretch (basic residues) spans K116 to K194. A phosphoserine mark is found at S145, S161, and S182.

Belongs to the histone H1/H5 family.

It is found in the nucleus. The protein resides in the chromosome. Functionally, histones H1 are necessary for the condensation of nucleosome chains into higher-order structures. This Salmo trutta (Brown trout) protein is Histone H1.